The following is a 66-amino-acid chain: Large ribosomal subunit protein bL28 (66 aa).

It belongs to the bacterial ribosomal protein bL28 family.

The protein is Large ribosomal subunit protein bL28 of Oenococcus oeni (strain ATCC BAA-331 / PSU-1).